Reading from the N-terminus, the 352-residue chain is Chorismate synthase (352 aa).

Positions 48 and 54 each coordinate NADP(+). Residues 125–127 (RSS), 238–239 (NA), Gly-278, 293–297 (KPTSS), and Arg-319 each bind FMN.

This sequence belongs to the chorismate synthase family. As to quaternary structure, homotetramer. The cofactor is FMNH2.

It carries out the reaction 5-O-(1-carboxyvinyl)-3-phosphoshikimate = chorismate + phosphate. It participates in metabolic intermediate biosynthesis; chorismate biosynthesis; chorismate from D-erythrose 4-phosphate and phosphoenolpyruvate: step 7/7. Catalyzes the anti-1,4-elimination of the C-3 phosphate and the C-6 proR hydrogen from 5-enolpyruvylshikimate-3-phosphate (EPSP) to yield chorismate, which is the branch point compound that serves as the starting substrate for the three terminal pathways of aromatic amino acid biosynthesis. This reaction introduces a second double bond into the aromatic ring system. The polypeptide is Chorismate synthase (Bordetella avium (strain 197N)).